Here is a 154-residue protein sequence, read N- to C-terminus: Aspartate carbamoyltransferase regulatory chain (154 aa).

Positions 109, 114, 138, and 141 each coordinate Zn(2+).

It belongs to the PyrI family. In terms of assembly, contains catalytic and regulatory chains. It depends on Zn(2+) as a cofactor.

Its function is as follows. Involved in allosteric regulation of aspartate carbamoyltransferase. The protein is Aspartate carbamoyltransferase regulatory chain of Aliivibrio fischeri (strain ATCC 700601 / ES114) (Vibrio fischeri).